A 462-amino-acid chain; its full sequence is Nuclear distribution protein PAC1 (462 aa).

One can recognise a LisH domain in the interval 9 to 41; the sequence is QAEELHKAIIAYLGVINAPKTAAAFREEVNFSA. Positions 60 to 87 form a coiled coil; it reads TSVVRLQKKVLELEQRNQSLQSELDSTT. The segment covering 78 to 99 has biased composition (polar residues); sequence SLQSELDSTTPTSLLRRNQDPS. The segment at 78 to 103 is disordered; the sequence is SLQSELDSTTPTSLLRRNQDPSSWLP. WD repeat units lie at residues 113 to 154, 156 to 196, 200 to 247, 250 to 289, 292 to 352, 354 to 393, 398 to 445, and 447 to 462; these read SHRS…RTVK, HTKG…KNIR, GHDH…CVKT, GHAD…AKCT, GHEH…IKTL, GHDN…RCVK, AHSH…AGIR, and VIAT…IFAS. Positions 414–434 are disordered; sequence KDAPTNGDAPNGTTANGASKK.

The protein belongs to the WD repeat LIS1/nudF family. Self-associates. Interacts with NDL1 and dynein.

It localises to the cytoplasm. It is found in the cytoskeleton. The protein localises to the spindle pole. Functionally, positively regulates the activity of the minus-end directed microtubule motor protein dynein. May enhance dynein-mediated microtubule sliding by targeting dynein to the microtubule plus end. Required for nuclear migration during vegetative growth as well as development. Required for retrograde early endosome (EE) transport from the hyphal tip. Required for localization of dynein to the mitotic spindle poles. Recruits additional proteins to the dynein complex at SPBs. The chain is Nuclear distribution protein PAC1 from Phaeosphaeria nodorum (strain SN15 / ATCC MYA-4574 / FGSC 10173) (Glume blotch fungus).